Here is a 275-residue protein sequence, read N- to C-terminus: 2-dehydro-3-deoxyphosphooctonate aldolase (275 aa).

Belongs to the KdsA family.

It localises to the cytoplasm. It carries out the reaction D-arabinose 5-phosphate + phosphoenolpyruvate + H2O = 3-deoxy-alpha-D-manno-2-octulosonate-8-phosphate + phosphate. Its pathway is carbohydrate biosynthesis; 3-deoxy-D-manno-octulosonate biosynthesis; 3-deoxy-D-manno-octulosonate from D-ribulose 5-phosphate: step 2/3. The protein operates within bacterial outer membrane biogenesis; lipopolysaccharide biosynthesis. The protein is 2-dehydro-3-deoxyphosphooctonate aldolase of Protochlamydia amoebophila (strain UWE25).